Consider the following 498-residue polypeptide: Probable malate:quinone oxidoreductase 2 (498 aa).

Belongs to the MQO family. Requires FAD as cofactor.

The enzyme catalyses (S)-malate + a quinone = a quinol + oxaloacetate. It participates in carbohydrate metabolism; tricarboxylic acid cycle; oxaloacetate from (S)-malate (quinone route): step 1/1. The sequence is that of Probable malate:quinone oxidoreductase 2 from Staphylococcus epidermidis (strain ATCC 35984 / DSM 28319 / BCRC 17069 / CCUG 31568 / BM 3577 / RP62A).